A 406-amino-acid chain; its full sequence is Argininosuccinate synthase (406 aa).

ATP contacts are provided by residues 12–20 (AYSGGLDTS) and alanine 39. L-citrulline contacts are provided by tyrosine 90 and serine 95. Residue glycine 120 participates in ATP binding. The L-aspartate site is built by threonine 122, asparagine 126, and aspartate 127. Residue asparagine 126 coordinates L-citrulline. The L-citrulline site is built by arginine 130, serine 179, serine 188, glutamate 264, and tyrosine 276.

It belongs to the argininosuccinate synthase family. Type 1 subfamily. As to quaternary structure, homotetramer.

The protein localises to the cytoplasm. It carries out the reaction L-citrulline + L-aspartate + ATP = 2-(N(omega)-L-arginino)succinate + AMP + diphosphate + H(+). It participates in amino-acid biosynthesis; L-arginine biosynthesis; L-arginine from L-ornithine and carbamoyl phosphate: step 2/3. In Citrifermentans bemidjiense (strain ATCC BAA-1014 / DSM 16622 / JCM 12645 / Bem) (Geobacter bemidjiensis), this protein is Argininosuccinate synthase.